The sequence spans 527 residues: Laccase-5 (527 aa).

Positions 1–23 (MGKYHSFVNVVALSLSLSGRVFG) are cleaved as a signal peptide. Residues 25 to 150 (IGPVTDLTIS…DGLRGPLVVY (126 aa)) enclose the Plastocyanin-like 1 domain. 2 N-linked (GlcNAc...) asparagine glycosylation sites follow: N74 and N77. Residues H87, H89, H132, and H134 each contribute to the Cu cation site. 2 disulfide bridges follow: C108/C516 and C140/C230. 10 N-linked (GlcNAc...) asparagine glycosylation sites follow: N156, N209, N233, N242, N276, N317, N358, N366, N393, and N402. Residues 162–306 (VDDDTTVITL…GGVNSAILRY (145 aa)) form the Plastocyanin-like 2 domain. The Plastocyanin-like 3 domain occupies 373–498 (TVPVLLQILS…AGFAIVWGED (126 aa)). Positions 425, 428, 430, 480, 481, 482, and 486 each coordinate Cu cation.

It belongs to the multicopper oxidase family. In terms of assembly, homodimer. The cofactor is Cu cation.

It localises to the secreted. It catalyses the reaction 4 hydroquinone + O2 = 4 benzosemiquinone + 2 H2O. Lignin degradation and detoxification of lignin-derived products. The sequence is that of Laccase-5 (LCC5) from Trametes villosa (White-rot fungus).